The sequence spans 96 residues: Neutrophil defensin 8 (96 aa).

Positions 1 to 19 (MRTLVILAAILLVALQAQA) are cleaved as a signal peptide. The propeptide occupies 20 to 66 (EPLQARTDEATAAQEQIPTDNPEVVVSLAWDESLAPKDSVPGLRKNM). 3 cysteine pairs are disulfide-bonded: Cys68–Cys96, Cys70–Cys85, and Cys75–Cys95.

Belongs to the alpha-defensin family.

It localises to the secreted. In terms of biological role, probable antibiotic and antifungal activity. This chain is Neutrophil defensin 8, found in Macaca mulatta (Rhesus macaque).